Consider the following 509-residue polypeptide: Lysophospholipid acyltransferase (509 aa).

The Lumenal segment spans residues 1-14 (MAYLIDIPFEYFSS). Residues 15-35 (FLGVHPDQLKLLFCFLSAYPF) traverse the membrane as a helical segment. Residues 36–55 (AGILKRLPSAPWIRNLFSIS) are Cytoplasmic-facing. A helical transmembrane segment spans residues 56–76 (IGLFYLIGVHHLYDGVLVLLF). The Lumenal portion of the chain corresponds to 77–94 (DALFTYFVAAFYRSSRMP). The helical transmembrane segment at 95 to 115 (WIIFIVILGHTFSSHVIRYIY) threads the bilayer. Over 116–223 (PSENTDITAS…LEPALGRCWR (108 aa)) the chain is Cytoplasmic. A helical membrane pass occupies residues 224 to 244 (GLLWLILFITGSSIYPLKFLL). Residues 245 to 246 (TP) lie on the Lumenal side of the membrane. A helical membrane pass occupies residues 247-267 (KFASSPILLKYGYVCITAFVA). Residues 268–410 (RMKYYGAWEL…TPGPFKRVYD (143 aa)) lie on the Cytoplasmic side of the membrane. The active site involves histidine 363. The chain crosses the membrane as a helical span at residues 411–431 (VIGMVATNLSLSYLIISFLLL). The Lumenal portion of the chain corresponds to 432–441 (NLKESIHVWK). Residues 442 to 462 (ELYFIVHIYILIALAVFNSPI) form a helical membrane-spanning segment. Residues 463–509 (RSKLDNKIRSRVNSYKLKSYEQSMKSTSDTDMLNMSVPKREDFENDE) lie on the Cytoplasmic side of the membrane. The tract at residues 488–509 (STSDTDMLNMSVPKREDFENDE) is disordered. Serine 490 is subject to Phosphoserine. A compositionally biased stretch (basic and acidic residues) spans 500–509 (PKREDFENDE).

It belongs to the membrane-bound acyltransferase family.

The protein localises to the endoplasmic reticulum membrane. Its subcellular location is the microsome membrane. The catalysed reaction is a 1-acyl-sn-glycero-3-phosphate + an acyl-CoA = a 1,2-diacyl-sn-glycero-3-phosphate + CoA. It carries out the reaction a 1-acyl-sn-glycero-3-phosphocholine + an acyl-CoA = a 1,2-diacyl-sn-glycero-3-phosphocholine + CoA. It catalyses the reaction a 1-acyl-sn-glycero-3-phosphoethanolamine + an acyl-CoA = a 1,2-diacyl-sn-glycero-3-phosphoethanolamine + CoA. Membrane-bound O-acyltransferase that mediates the incorporation of unsaturated acyl chains into the sn-2 position of phospholipids. The chain is Lysophospholipid acyltransferase (ale1) from Schizosaccharomyces pombe (strain 972 / ATCC 24843) (Fission yeast).